Consider the following 323-residue polypeptide: V-type ATP synthase subunit C (323 aa).

It belongs to the V-ATPase V0D/AC39 subunit family.

Its function is as follows. Produces ATP from ADP in the presence of a proton gradient across the membrane. This Thermus thermophilus (strain ATCC 27634 / DSM 579 / HB8) protein is V-type ATP synthase subunit C (atpC).